Reading from the N-terminus, the 132-residue chain is Vesicle transport protein GOT1A (132 aa).

Topologically, residues 1–16 (MISITEWQKIGVGTTG) are cytoplasmic. The helical transmembrane segment at 17–37 (FGIFFILFGMLLYFDSVLLAF) threads the bilayer. The Lumenal portion of the chain corresponds to 38–39 (GN). A helical transmembrane segment spans residues 40–60 (LLFLTGLSLIIGLRRTFSFFF). The Cytoplasmic segment spans residues 61-68 (QRHKFKGT). The chain crosses the membrane as a helical span at residues 69–89 (SFFLGGVVIVLLRWPLLGMCL). The Lumenal portion of the chain corresponds to 90-100 (ETYGFFSLFRG). Residues 101 to 121 (FFPVAFGFLGSASNIPFLSAL) traverse the membrane as a helical segment. The Cytoplasmic portion of the chain corresponds to 122–132 (FQRLQGTSSMV).

This sequence belongs to the GOT1 family.

The protein resides in the golgi apparatus membrane. Its function is as follows. May be involved in fusion of ER-derived transport vesicles with the Golgi complex. In Bos taurus (Bovine), this protein is Vesicle transport protein GOT1A.